The chain runs to 628 residues: EIN3-binding F-box protein 1 (628 aa).

Residues 61–109 form the F-box domain; the sequence is PVSIDVLPDECLFEIFRRLSGPQERSACAFVSKQWLTLVSSIRQKEIDV.

As to quaternary structure, part of a SCF (SKP1-cullin-F-box) protein ligase complex. Interacts with CUL1, SKP1A/ASK1, SKP1B/ASK2, ASK11, ASK12, ASK13, ASK18, EIN3, and EIL1. Ubiquitous.

The protein localises to the nucleus. The protein operates within protein modification; protein ubiquitination. Functionally, component of SCF(EBF1) E3 ubiquitin ligase complexes, which may mediate the ubiquitination and subsequent proteasomal degradation of target proteins (probably including EIN3 and EIL1). Regulator of the ethylene signaling cascade by modulating the stability of EIN3 and EIL1 proteins. Confers insensitivity to ethylene. The protein is EIN3-binding F-box protein 1 (EBF1) of Arabidopsis thaliana (Mouse-ear cress).